The sequence spans 145 residues: Large ribosomal subunit protein uL15 (145 aa).

Composition is skewed to basic residues over residues 1-13 and 22-33; these read MIRKTKKIRKQRG and TKKRRGAGHRGG. A disordered region spans residues 1–41; that stretch reads MIRKTKKIRKQRGSRSVGGGCTKKRRGAGHRGGRGQAGGNK.

It belongs to the universal ribosomal protein uL15 family. In terms of assembly, part of the 50S ribosomal subunit.

In terms of biological role, binds to the 23S rRNA. In Methanosphaera stadtmanae (strain ATCC 43021 / DSM 3091 / JCM 11832 / MCB-3), this protein is Large ribosomal subunit protein uL15.